The chain runs to 245 residues: Orotidine 5'-phosphate decarboxylase (245 aa).

Substrate contacts are provided by residues Asp-22, Lys-44, 71–80 (DLKFHDIPNT), Thr-131, Arg-192, Gln-201, Gly-221, and Arg-222. Lys-73 (proton donor) is an active-site residue.

The protein belongs to the OMP decarboxylase family. Type 1 subfamily. Homodimer.

It carries out the reaction orotidine 5'-phosphate + H(+) = UMP + CO2. It participates in pyrimidine metabolism; UMP biosynthesis via de novo pathway; UMP from orotate: step 2/2. Functionally, catalyzes the decarboxylation of orotidine 5'-monophosphate (OMP) to uridine 5'-monophosphate (UMP). In Klebsiella pneumoniae (strain 342), this protein is Orotidine 5'-phosphate decarboxylase.